We begin with the raw amino-acid sequence, 232 residues long: LOB domain-containing protein 11 (232 aa).

The disordered stretch occupies residues 1–50; the sequence is MLKMEINGGVATPTASAVAKVTETTTPVNSPSPTSSPPPPPSPQQPPQPP. Pro residues predominate over residues 34 to 50; the sequence is TSSPPPPPSPQQPPQPP. The LOB domain maps to 54 to 155; the sequence is SPCAACKILR…AQLAKTQVEL (102 aa). The segment at 181-218 is disordered; the sequence is EQGQQKMSFESSFESGDEFISSPDEESNDLGFLEDNNN. Residues 188–202 are compositionally biased toward low complexity; the sequence is SFESSFESGDEFISS.

The protein belongs to the LOB domain-containing protein family. As to expression, expressed in young shoots, stems, leaves and flowers.

In Arabidopsis thaliana (Mouse-ear cress), this protein is LOB domain-containing protein 11 (LBD11).